Here is a 574-residue protein sequence, read N- to C-terminus: Developmental and secondary metabolism regulator veA (574 aa).

Disordered stretches follow at residues 1 to 22 (MATRAPLAPPPNETEASVSRIT), 39 to 60 (ERARACGAGAKSSADRRPVDPP), 255 to 500 (RSSD…GAGK), and 513 to 540 (RSYEDSFGHDDRPLYNGMRPDTESYPRR). In terms of domain architecture, Velvet spans 25–230 (GKKLTYKLNV…AEQGCRVRIR (206 aa)). The Nuclear localization signal motif lies at 39–44 (ERARAC). Pro residues-rich tracts occupy residues 314 to 323 (RPLPPAPGPA) and 330 to 341 (PAPPAPPAPPSH). Polar residues-rich tracts occupy residues 343 to 353 (PGYQSHLSFGS), 385 to 394 (HARNPSTSAE), 406 to 415 (RMSTERSSYP), and 448 to 458 (VAQSAAPRSQT). Positions 457–498 (QTPSSSLVPSLPPLKALSGDYPNNLSQSSSSTSQSPSHDLGA) are PEST. 2 stretches are compositionally biased toward low complexity: residues 459–474 (PSSSLVPSLPPLKALS) and 482–493 (SQSSSSTSQSPS). Residues 513 to 525 (RSYEDSFGHDDRP) show a composition bias toward basic and acidic residues.

Belongs to the velvet family. VeA subfamily. In terms of assembly, component of the heterotrimeric velvet complex composed of laeA, veA and velB; VeA acting as a bridging protein between laeA and velB.

Its subcellular location is the nucleus. It localises to the cytoplasm. Component of the velvet transcription factor complex that controls sexual/asexual developmental ratio in response to light, promoting sexual development in the darkness while stimulating asexual sporulation under illumination. The velvet complex hat acts as a global regulator for secondary metabolite gene expression. Controls the expression of the cyclopiazonic acid, aflatrem, and aflatoxin gene clusters. Controls the expression of the sclerotium-specific pigment asparasone A gene cluster. Controls the expression of the aflavarin gene cluster. also controls the production of hydrolases and other extracellular proteins during growth on natural starch-based substrates. Regulates genes involved in the High Osmolarity Glycerol (HOG) signaling pathway. Required for the conidial and sclerotial density-dependent production. This chain is Developmental and secondary metabolism regulator veA, found in Aspergillus flavus (strain ATCC 200026 / FGSC A1120 / IAM 13836 / NRRL 3357 / JCM 12722 / SRRC 167).